A 1362-amino-acid polypeptide reads, in one-letter code: DNA-directed RNA polymerase subunit beta (1362 aa).

Belongs to the RNA polymerase beta chain family. As to quaternary structure, the RNAP catalytic core consists of 2 alpha, 1 beta, 1 beta' and 1 omega subunit. When a sigma factor is associated with the core the holoenzyme is formed, which can initiate transcription.

It carries out the reaction RNA(n) + a ribonucleoside 5'-triphosphate = RNA(n+1) + diphosphate. Functionally, DNA-dependent RNA polymerase catalyzes the transcription of DNA into RNA using the four ribonucleoside triphosphates as substrates. The polypeptide is DNA-directed RNA polymerase subunit beta (Acinetobacter baylyi (strain ATCC 33305 / BD413 / ADP1)).